The chain runs to 234 residues: BTB/POZ domain-containing protein KCTD5 (234 aa).

N-acetylalanine is present on alanine 2. Serine 10 is modified (phosphoserine). A BTB domain is found at 44–146; the sequence is KWVRLNVGGT…LVKDKIRERD (103 aa). The tract at residues 213–234 is disordered; the sequence is PYGTASEPSEKAKILQERGSRM. The span at 220-234 shows a compositional bias: basic and acidic residues; the sequence is PSEKAKILQERGSRM.

In terms of assembly, homopentamer. Interacts (via C-terminus) with GRASP55/GORASP2. Interacts with CUL3 and with ubiquitinated proteins. Interacts with CRY1. (Microbial infection) Interacts with adeno-associated virus 2 (AAV-2) REP proteins.

Its subcellular location is the cytoplasm. It is found in the cytosol. The protein resides in the nucleus. Functionally, its interaction with CUL3 suggests that it may act as a substrate adapter in some E3 ligase complex. Does not affect the function of Kv channel Kv2.1/KCNB1, Kv1.2/KCNA2, Kv4.2/KCND2 and Kv3.4/KCNC4. In Homo sapiens (Human), this protein is BTB/POZ domain-containing protein KCTD5 (KCTD5).